A 176-amino-acid polypeptide reads, in one-letter code: ATP-dependent protease subunit HslV (176 aa).

Thr-5 is a catalytic residue. Positions 161, 164, and 167 each coordinate Na(+).

Belongs to the peptidase T1B family. HslV subfamily. In terms of assembly, a double ring-shaped homohexamer of HslV is capped on each side by a ring-shaped HslU homohexamer. The assembly of the HslU/HslV complex is dependent on binding of ATP.

The protein resides in the cytoplasm. It carries out the reaction ATP-dependent cleavage of peptide bonds with broad specificity.. Its activity is regulated as follows. Allosterically activated by HslU binding. Protease subunit of a proteasome-like degradation complex believed to be a general protein degrading machinery. In Caldanaerobacter subterraneus subsp. tengcongensis (strain DSM 15242 / JCM 11007 / NBRC 100824 / MB4) (Thermoanaerobacter tengcongensis), this protein is ATP-dependent protease subunit HslV.